The primary structure comprises 350 residues: tRNA uridine(34) hydroxylase (350 aa).

Residues 146–240 (DDPDALFIDM…YARKAREQGL (95 aa)) form the Rhodanese domain. The active-site Cysteine persulfide intermediate is Cys-200.

The protein belongs to the TrhO family.

It catalyses the reaction uridine(34) in tRNA + AH2 + O2 = 5-hydroxyuridine(34) in tRNA + A + H2O. In terms of biological role, catalyzes oxygen-dependent 5-hydroxyuridine (ho5U) modification at position 34 in tRNAs, the first step in 5-carboxymethoxyuridine (cmo5U) biosynthesis. May be part of an alternate pathway, which is able to bypass cmo5U biogenesis in a subset of tRNAs under aerobic conditions. This Escherichia coli O157:H7 protein is tRNA uridine(34) hydroxylase.